The primary structure comprises 872 residues: Chaperone protein ClpB 2 (872 aa).

Residues 6–148 enclose the Clp R domain; that stretch reads PNKFTEKAWE…AEIIKQIRGT (143 aa). Repeat regions lie at residues 9–73 and 85–148; these read FTEK…IAQQ and LGRS…IRGT. The tract at residues 161–342 is NBD1; it reads ESLEKYGRDL…RRFQEVLVDE (182 aa). An ATP-binding site is contributed by 208-215; that stretch reads GEPGVGKT. The interval 343-551 is linker; sequence PNVLDTISIL…IAEIISKWTG (209 aa). Positions 393-527 form a coiled coil; it reads IDLVDEAAAK…LETQLAEQQT (135 aa). The interval 561–772 is NBD2; that stretch reads EKEKLLHLED…RVDETIIFHG (212 aa). Residue 611 to 618 participates in ATP binding; the sequence is GPTGVGKT. The segment at 773–872 is C-terminal; that stretch reads LQKSELRSIV…TSLRGDLVIV (100 aa).

This sequence belongs to the ClpA/ClpB family. Homohexamer. The oligomerization is ATP-dependent.

It is found in the cytoplasm. Its function is as follows. Part of a stress-induced multi-chaperone system, it is involved in the recovery of the cell from heat-induced damage, in cooperation with DnaK, DnaJ and GrpE. Acts before DnaK, in the processing of protein aggregates. Protein binding stimulates the ATPase activity; ATP hydrolysis unfolds the denatured protein aggregates, which probably helps expose new hydrophobic binding sites on the surface of ClpB-bound aggregates, contributing to the solubilization and refolding of denatured protein aggregates by DnaK. This is Chaperone protein ClpB 2 (clpB2) from Synechocystis sp. (strain ATCC 27184 / PCC 6803 / Kazusa).